Reading from the N-terminus, the 602-residue chain is Elongation factor 4 (602 aa).

A tr-type G domain is found at lysine 2–lysine 184. GTP contacts are provided by residues aspartate 14–threonine 19 and asparagine 131–aspartate 134.

It belongs to the TRAFAC class translation factor GTPase superfamily. Classic translation factor GTPase family. LepA subfamily.

Its subcellular location is the cell membrane. It carries out the reaction GTP + H2O = GDP + phosphate + H(+). Functionally, required for accurate and efficient protein synthesis under certain stress conditions. May act as a fidelity factor of the translation reaction, by catalyzing a one-codon backward translocation of tRNAs on improperly translocated ribosomes. Back-translocation proceeds from a post-translocation (POST) complex to a pre-translocation (PRE) complex, thus giving elongation factor G a second chance to translocate the tRNAs correctly. Binds to ribosomes in a GTP-dependent manner. This is Elongation factor 4 from Baumannia cicadellinicola subsp. Homalodisca coagulata.